Consider the following 129-residue polypeptide: Small ribosomal subunit protein uS9 (129 aa).

Belongs to the universal ribosomal protein uS9 family.

This chain is Small ribosomal subunit protein uS9, found in Chlorobium phaeovibrioides (strain DSM 265 / 1930) (Prosthecochloris vibrioformis (strain DSM 265)).